The primary structure comprises 169 residues: Ribosome maturation factor RimM (169 aa).

In terms of domain architecture, PRC barrel spans 96–169 (DGEYYWADLI…RILVDWGLDY (74 aa)).

It belongs to the RimM family. As to quaternary structure, binds ribosomal protein uS19.

The protein resides in the cytoplasm. Functionally, an accessory protein needed during the final step in the assembly of 30S ribosomal subunit, possibly for assembly of the head region. Essential for efficient processing of 16S rRNA. May be needed both before and after RbfA during the maturation of 16S rRNA. It has affinity for free ribosomal 30S subunits but not for 70S ribosomes. In Chromobacterium violaceum (strain ATCC 12472 / DSM 30191 / JCM 1249 / CCUG 213 / NBRC 12614 / NCIMB 9131 / NCTC 9757 / MK), this protein is Ribosome maturation factor RimM.